We begin with the raw amino-acid sequence, 673 residues long: Putative K(+)-stimulated pyrophosphate-energized sodium pump (673 aa).

The next 5 membrane-spanning stretches (helical) occupy residues 3 to 23 (SFIVYSVLAGVIALIFAFMLS), 62 to 82 (IVIVTVILAIFVGWQTAACFI), 84 to 104 (GAIFSIFAGYFGMNVATKANV), 127 to 147 (VMGMSVVGLGVVGIGIMYYIF), and 154 to 174 (VTGFGLGASSIALFARVGGGI). Residue Lys-177 coordinates substrate. 4 residues coordinate Mg(2+): Asp-180, Asp-184, Asn-207, and Asp-210. Helical transmembrane passes span 222–242 (LFESYVGSIISALTLGTVVYA), 247–267 (VMFPLILSSIGIVASIIGILF), 279–299 (ALNTGTYIGGIIVIVSAAILS), 302–322 (IFGNLKAFFAVASGLVVGMII), 364–384 (LWPIVLISIGVLVSFFVMGGG), and 387–407 (AMVGLYGISLAAVGMLSTTGL). Asp-419 is a binding site for Mg(2+). 4 helical membrane passes run 449–469 (AAIGKGFAIGSAALTALSLFA), 486–506 (VTLVGLFIGAMLPFLFGALTM), 553–573 (EMILPGVLAIVVPVAMGLLLG), and 576–596 (ALGGLLAGALVSGVLVGILMS). Residues Asp-603, Asp-629, and Asp-633 each coordinate Ca(2+). Lys-636 is a binding site for substrate. The helical transmembrane segment at 652-672 (IVSLVFAPVVLQYGGILLNLI) threads the bilayer.

This sequence belongs to the H(+)-translocating pyrophosphatase (TC 3.A.10) family. K(+)-stimulated subfamily. Homodimer. The cofactor is Mg(2+).

It is found in the cell membrane. The catalysed reaction is Na(+)(in) + diphosphate + H2O = Na(+)(out) + 2 phosphate + H(+). Its activity is regulated as follows. Requires K(+) for maximal activity. Its function is as follows. Sodium pump that utilizes the energy of pyrophosphate hydrolysis as the driving force for Na(+) movement across the membrane. The protein is Putative K(+)-stimulated pyrophosphate-energized sodium pump of Clostridium tetani (strain Massachusetts / E88).